The primary structure comprises 116 residues: Large ribosomal subunit protein uL24 (116 aa).

It belongs to the universal ribosomal protein uL24 family. As to quaternary structure, part of the 50S ribosomal subunit.

Its function is as follows. One of two assembly initiator proteins, it binds directly to the 5'-end of the 23S rRNA, where it nucleates assembly of the 50S subunit. In terms of biological role, located at the polypeptide exit tunnel on the outside of the subunit. The sequence is that of Large ribosomal subunit protein uL24 from Methanosarcina barkeri (strain Fusaro / DSM 804).